The chain runs to 558 residues: N-acetylglucosamine-6-O-sulfatase (558 aa).

The residue at position 101 (S101) is a 3-oxoalanine (Ser).

Belongs to the sulfatase family. Post-translationally, the conversion to 3-oxoalanine (also known as C-formylglycine, FGly), of a serine or cysteine residue in prokaryotes and of a cysteine residue in eukaryotes, is critical for catalytic activity.

In terms of biological role, exosulfatase involved in the degradation of the glycosaminoglycan (GAG) heparan sulfate (HS). Catalyzes the hydrolysis of the 6-sulfate groups of the N-acetyl-D-glucosamine 6-sulfate units. GAG-specific sulfatases play a key role in the persistence of the major human gut symbiont B.thetaiotaomicron in the host gastrointestinal tract. In Bacteroides thetaiotaomicron (strain ATCC 29148 / DSM 2079 / JCM 5827 / CCUG 10774 / NCTC 10582 / VPI-5482 / E50), this protein is N-acetylglucosamine-6-O-sulfatase.